Reading from the N-terminus, the 758-residue chain is Microtubule-associated protein tau (758 aa).

Basic and acidic residues predominate over residues 1-26; it reads MAEPHQEFDVTEDHAGTYGLGDRKDQ. The tract at residues 1-573 is disordered; sequence MAEPHQEFDV…PVPMPDLKNV (573 aa). N-acetylalanine is present on Ala-2. 2 positions are modified to phosphotyrosine: Tyr-18 and Tyr-29. Lys-44 is covalently cross-linked (Glycyl lysine isopeptide (Lys-Gly) (interchain with G-Cter in ubiquitin)). Phosphoserine occurs at positions 46 and 61. Residues 61-71 are compositionally biased toward polar residues; that stretch reads SETSDAKSTPT. 3 positions are modified to phosphothreonine: Thr-69, Thr-71, and Thr-111. 2 stretches are compositionally biased toward basic and acidic residues: residues 179 to 189 and 207 to 216; these read EGGRHAPELLK and GGKERPGSKE. Ser-214 bears the Phosphoserine mark. The span at 217-228 shows a compositional bias: acidic residues; the sequence is EVDEDRDVDESS. Over residues 314-323 the composition is skewed to basic and acidic residues; that stretch reads EQAHSEEHLR. Residues 325–340 show a composition bias toward low complexity; that stretch reads AAFPGAPGEGPEAQGP. 2 stretches are compositionally biased toward basic and acidic residues: residues 344–356 and 381–393; these read EDAK…EPSE and KSKD…DKKA. A compositionally biased stretch (polar residues) spans 440 to 452; it reads KYVSSVTPRTGSS. Positions 455–466 are enriched in basic and acidic residues; that stretch reads KEMKLKGADGKT. Phosphothreonine is present on Thr-470. An Omega-N-methylarginine modification is found at Arg-472. Lys-480 carries the post-translational modification N6,N6-dimethyllysine; alternate. Lys-480 carries the N6-acetyllysine; alternate modification. Thr-486, Thr-492, and Thr-498 each carry phosphothreonine. The segment covering 491-503 has biased composition (pro residues); that stretch reads KTPPAPKTPPSSG. Residues Ser-502, Ser-508, and Ser-512 each carry the phosphoserine modification. A compositionally biased stretch (low complexity) spans 504-531; the sequence is EPPKSGDRSGYSSPGSPGTPGSRSRTPS. Tyr-514 carries the post-translational modification Phosphotyrosine. 3 positions are modified to phosphoserine: Ser-515, Ser-516, and Ser-519. 2 positions are modified to phosphothreonine: Thr-522 and Thr-529. The residue at position 531 (Ser-531) is a Phosphoserine. The residue at position 534 (Thr-534) is a Phosphothreonine. Position 542 is an N6-acetyllysine (Lys-542). At Thr-548 the chain carries Phosphothreonine. A phosphoserine mark is found at Ser-552 and Ser-554. Tau/MAP repeat units lie at residues 561-591, 592-622, 623-653, and 654-685; these read QTAP…GGGK, VQII…GGGS, VQIV…GGGQ, and VEVK…GGGH. Lys-571 participates in a covalent cross-link: Glycyl lysine isopeptide (Lys-Gly) (interchain with G-Cter in ubiquitin). Lys-576 is subject to N6-acetyllysine; alternate. The residue at position 576 (Lys-576) is an N6-methyllysine; alternate. A Glycyl lysine isopeptide (Lys-Gly) (interchain with G-Cter in ubiquitin); alternate cross-link involves residue Lys-576. Phosphoserine is present on Ser-579. Residue Lys-584 forms a Glycyl lysine isopeptide (Lys-Gly) (interchain with G-Cter in ubiquitin) linkage. Lys-598 bears the N6-acetyllysine; alternate mark. Lys-598 participates in a covalent cross-link: Glycyl lysine isopeptide (Lys-Gly) (interchain with G-Cter in ubiquitin); alternate. A phosphoserine mark is found at Ser-602 and Ser-606. Lys-607 is subject to N6-acetyllysine. Residue Ser-610 is modified to Phosphoserine. Lys-615 is modified (N6-acetyllysine; alternate). A Glycyl lysine isopeptide (Lys-Gly) (interchain with G-Cter in ubiquitin); alternate cross-link involves residue Lys-615. Ser-622 bears the Phosphoserine mark. Lys-628 is modified (N6,N6-dimethyllysine; alternate). Residues Lys-628, Lys-634, and Lys-638 each carry the N6-acetyllysine; alternate modification. Residues Lys-628, Lys-634, and Lys-638 each participate in a glycyl lysine isopeptide (Lys-Gly) (interchain with G-Cter in ubiquitin); alternate cross-link. The residue at position 641 (Ser-641) is a Phosphoserine. N6-acetyllysine; alternate occurs at positions 648, 660, and 664. Glycyl lysine isopeptide (Lys-Gly) (interchain with G-Cter in ubiquitin); alternate cross-links involve residues Lys-648, Lys-660, and Lys-664. The residue at position 666 (Arg-666) is an Omega-N-methylarginine. At Ser-669 the chain carries Phosphoserine. Residue Lys-670 forms a Glycyl lysine isopeptide (Lys-Gly) (interchain with G-Cter in ubiquitin) linkage. At Ser-673 the chain carries Phosphoserine. Residue Lys-686 is modified to N6-acetyllysine; alternate. A Glycyl lysine isopeptide (Lys-Gly) (interchain with G-Cter in ubiquitin); alternate cross-link involves residue Lys-686. Lys-692 participates in a covalent cross-link: Glycyl lysine isopeptide (Lys-Gly) (interchain with G-Cter in ubiquitin). Lys-702 is subject to N6-acetyllysine; alternate. A Glycyl lysine isopeptide (Lys-Gly) (interchain with G-Cter in ubiquitin); alternate cross-link involves residue Lys-702. Tyr-711 bears the Phosphotyrosine mark. Phosphoserine occurs at positions 713 and 717. A disordered region spans residues 715-734; the sequence is VVSGDTSPRHLSNVSSTGSI. Residues 718-733 are compositionally biased toward polar residues; the sequence is GDTSPRHLSNVSSTGS. Thr-720 bears the Phosphothreonine mark. Residues Ser-721, Ser-726, Ser-733, and Ser-739 each carry the phosphoserine modification. Thr-744 is modified (phosphothreonine).

Interacts with MARK1, MARK2, MARK3 and MARK4. Interacts with SQSTM1 when polyubiquitinated. Interacts with PSMC2 through SQSTM1. Interacts with FKBP4. Binds to CSNK1D. Interacts with SGK1. Interacts with EPM2A; the interaction dephosphorylates MAPT at Ser-396. Interacts with PIN1. Interacts with LRRK2. Interacts with LRP1, leading to endocytosis; this interaction is reduced in the presence of LRPAP1/RAP. Polyubiquitinated. Requires functional TRAF6 and may provoke SQSTM1-dependent degradation by the proteasome. In terms of processing, phosphorylation at various serine and threonine residues in S-P or T-P motifs by proline-directed protein kinases (PDPK1, CDK1, CDK5, GSK3, MAPK) (a few sites per protein in interphase, more in mitosis), and at serine residues in K-X-G-S motifs by MAP/microtubule affinity-regulating kinase (MARK1, MARK2, MARK3 or MARK4), causing detachment from microtubules, and their disassembly. Phosphorylation at Ser-579 by BRSK1 and BRSK2 in neurons affects ability to bind microtubules and plays a role in neuron polarization. Phosphorylated by PHK. Dephosphorylation at several serine and threonine residues by the serine/threonine phosphatase PPP5C. Phosphorylation at Ser-214 by SGK1 mediates microtubule depolymerization and neurite formation in hippocampal neurons.

It is found in the cytoplasm. The protein resides in the cytosol. It localises to the cell membrane. Its subcellular location is the cytoskeleton. The protein localises to the cell projection. It is found in the axon. The protein resides in the dendrite. Its function is as follows. Promotes microtubule assembly and stability, and might be involved in the establishment and maintenance of neuronal polarity. The C-terminus binds axonal microtubules while the N-terminus binds neural plasma membrane components, suggesting that tau functions as a linker protein between both. Axonal polarity is predetermined by tau localization (in the neuronal cell) in the domain of the cell body defined by the centrosome. The short isoforms allow plasticity of the cytoskeleton whereas the longer isoforms may preferentially play a role in its stabilization. In Pongo pygmaeus (Bornean orangutan), this protein is Microtubule-associated protein tau (MAPT).